Reading from the N-terminus, the 195-residue chain is Imidazoleglycerol-phosphate dehydratase (195 aa).

This sequence belongs to the imidazoleglycerol-phosphate dehydratase family.

The protein localises to the cytoplasm. It carries out the reaction D-erythro-1-(imidazol-4-yl)glycerol 3-phosphate = 3-(imidazol-4-yl)-2-oxopropyl phosphate + H2O. It participates in amino-acid biosynthesis; L-histidine biosynthesis; L-histidine from 5-phospho-alpha-D-ribose 1-diphosphate: step 6/9. The polypeptide is Imidazoleglycerol-phosphate dehydratase (Thermotoga maritima (strain ATCC 43589 / DSM 3109 / JCM 10099 / NBRC 100826 / MSB8)).